We begin with the raw amino-acid sequence, 165 residues long: Methylated-DNA--protein-cysteine methyltransferase (165 aa).

Cysteine 126 (nucleophile; methyl group acceptor) is an active-site residue.

It belongs to the MGMT family.

The protein localises to the cytoplasm. It carries out the reaction a 6-O-methyl-2'-deoxyguanosine in DNA + L-cysteinyl-[protein] = S-methyl-L-cysteinyl-[protein] + a 2'-deoxyguanosine in DNA. The enzyme catalyses a 4-O-methyl-thymidine in DNA + L-cysteinyl-[protein] = a thymidine in DNA + S-methyl-L-cysteinyl-[protein]. In terms of biological role, involved in the cellular defense against the biological effects of O6-methylguanine (O6-MeG) and O4-methylthymine (O4-MeT) in DNA. Repairs the methylated nucleobase in DNA by stoichiometrically transferring the methyl group to a cysteine residue in the enzyme. This is a suicide reaction: the enzyme is irreversibly inactivated. The sequence is that of Methylated-DNA--protein-cysteine methyltransferase from Mycobacterium bovis (strain ATCC BAA-935 / AF2122/97).